The following is a 258-amino-acid chain: Venom plasminogen activator Haly-PA (258 aa).

Positions 1–18 (MALIRVLANLLILQLSYA) are cleaved as a signal peptide. A propeptide spanning residues 19–24 (QKSSEL) is cleaved from the precursor. In terms of domain architecture, Peptidase S1 spans 25 to 249 (VVGGDECNIN…HLDWIKSIIA (225 aa)). Disulfide bonds link cysteine 31-cysteine 163, cysteine 50-cysteine 66, cysteine 98-cysteine 256, cysteine 142-cysteine 210, cysteine 174-cysteine 189, and cysteine 200-cysteine 225. Asparagine 44 carries an N-linked (GlcNAc...) asparagine glycan. Catalysis depends on charge relay system residues histidine 65 and aspartate 110. Serine 204 (charge relay system) is an active-site residue.

This sequence belongs to the peptidase S1 family. Snake venom subfamily. In terms of assembly, monomer. Post-translationally, glycosylated. As to expression, expressed by the venom gland.

The protein localises to the secreted. Snake venom serine protease that activates plasminogen. Displays indirect fibrino(geno)lytic activity through conversion of plasminogen to plasmin. Shows a preferential cleavage at Arg-|-Xaa instead of Lys-|-Xaa bonds. The sequence is that of Venom plasminogen activator Haly-PA from Gloydius brevicauda (Korean slamosa snake).